Consider the following 588-residue polypeptide: Arylsulfatase L (588 aa).

An N-terminal signal peptide occupies residues 1 to 31; it reads MLHLHHSWLCFRSWLAGMLSVLLGLVPSASS. N-linked (GlcNAc...) asparagine glycosylation occurs at Asn32. Residues Asp46 and Asp47 each coordinate Ca(2+). N-linked (GlcNAc...) asparagine glycosylation occurs at Asn58. Cys86 lines the Ca(2+) pocket. Cys86 functions as the Nucleophile in the catalytic mechanism. A 3-oxoalanine (Cys) modification is found at Cys86. The N-linked (GlcNAc...) asparagine glycan is linked to Asn125. Lys145 serves as a coordination point for substrate. His147 is a catalytic residue. Asn258 carries N-linked (GlcNAc...) asparagine glycosylation. His301 is a substrate binding site. A glycan (N-linked (GlcNAc...) asparagine) is linked at Asn344. Ca(2+) is bound by residues Asp353 and His354. Lys378 contributes to the substrate binding site.

The protein belongs to the sulfatase family. Ca(2+) serves as cofactor. Post-translationally, the conversion to 3-oxoalanine (also known as C-formylglycine, FGly), of a serine or cysteine residue in prokaryotes and of a cysteine residue in eukaryotes, is critical for catalytic activity.

The protein localises to the golgi apparatus. It is found in the golgi stack. It carries out the reaction an aryl sulfate + H2O = a phenol + sulfate + H(+). Functionally, exhibits arylsulfatase activity towards the artificial substrate 4-methylumbelliferyl sulfate. May be essential for the correct composition of cartilage and bone matrix during development. Has no activity toward steroid sulfates. The polypeptide is Arylsulfatase L (ARSL) (Macaca fascicularis (Crab-eating macaque)).